Reading from the N-terminus, the 165-residue chain is Transcription elongation factor GreA (165 aa).

The stretch at 55 to 78 forms a coiled coil; that stretch reads AAKEEQGKQELRVRQLTQLLENAK.

This sequence belongs to the GreA/GreB family.

In terms of biological role, necessary for efficient RNA polymerase transcription elongation past template-encoded arresting sites. The arresting sites in DNA have the property of trapping a certain fraction of elongating RNA polymerases that pass through, resulting in locked ternary complexes. Cleavage of the nascent transcript by cleavage factors such as GreA or GreB allows the resumption of elongation from the new 3'terminus. GreA releases sequences of 2 to 3 nucleotides. This chain is Transcription elongation factor GreA, found in Streptomyces avermitilis (strain ATCC 31267 / DSM 46492 / JCM 5070 / NBRC 14893 / NCIMB 12804 / NRRL 8165 / MA-4680).